Here is a 181-residue protein sequence, read N- to C-terminus: Shikimate kinase (181 aa).

17-22 (GAGKTT) provides a ligand contact to ATP. Thr-21 contributes to the Mg(2+) binding site. The substrate site is built by Asp-39, Arg-63, and Gly-85. ATP is bound at residue Arg-122. Position 141 (Arg-141) interacts with substrate.

The protein belongs to the shikimate kinase family. Monomer. The cofactor is Mg(2+).

The protein localises to the cytoplasm. It catalyses the reaction shikimate + ATP = 3-phosphoshikimate + ADP + H(+). The protein operates within metabolic intermediate biosynthesis; chorismate biosynthesis; chorismate from D-erythrose 4-phosphate and phosphoenolpyruvate: step 5/7. Functionally, catalyzes the specific phosphorylation of the 3-hydroxyl group of shikimic acid using ATP as a cosubstrate. The protein is Shikimate kinase of Trichormus variabilis (strain ATCC 29413 / PCC 7937) (Anabaena variabilis).